Consider the following 254-residue polypeptide: Phosphoribosylaminoimidazole-succinocarboxamide synthase (254 aa).

This sequence belongs to the SAICAR synthetase family.

It carries out the reaction 5-amino-1-(5-phospho-D-ribosyl)imidazole-4-carboxylate + L-aspartate + ATP = (2S)-2-[5-amino-1-(5-phospho-beta-D-ribosyl)imidazole-4-carboxamido]succinate + ADP + phosphate + 2 H(+). Its pathway is purine metabolism; IMP biosynthesis via de novo pathway; 5-amino-1-(5-phospho-D-ribosyl)imidazole-4-carboxamide from 5-amino-1-(5-phospho-D-ribosyl)imidazole-4-carboxylate: step 1/2. The polypeptide is Phosphoribosylaminoimidazole-succinocarboxamide synthase (Acidiphilium cryptum (strain JF-5)).